Consider the following 347-residue polypeptide: NADH-ubiquinone oxidoreductase chain 2 (347 aa).

A run of 10 helical transmembrane segments spans residues 3–23 (PMIF…VMMS), 25–45 (HWFM…PVLM), 59–79 (YFLT…INLM), 96–116 (MLIT…FWVP), 122–142 (IPLS…LSLL), 149–169 (INME…GWGG), 201–221 (SFLN…LLIF), 239–259 (IIAT…PLTG), 274–294 (NSTI…FFYI), and 326–346 (ILPL…FLML).

It belongs to the complex I subunit 2 family. As to quaternary structure, core subunit of respiratory chain NADH dehydrogenase (Complex I) which is composed of 45 different subunits. Interacts with TMEM242.

The protein localises to the mitochondrion inner membrane. It catalyses the reaction a ubiquinone + NADH + 5 H(+)(in) = a ubiquinol + NAD(+) + 4 H(+)(out). Its function is as follows. Core subunit of the mitochondrial membrane respiratory chain NADH dehydrogenase (Complex I) that is believed to belong to the minimal assembly required for catalysis. Complex I functions in the transfer of electrons from NADH to the respiratory chain. The immediate electron acceptor for the enzyme is believed to be ubiquinone. This chain is NADH-ubiquinone oxidoreductase chain 2, found in Crocidura hildegardeae (Hildegarde's shrew).